A 705-amino-acid polypeptide reads, in one-letter code: Ion-translocating oxidoreductase complex subunit C (705 aa).

4Fe-4S ferredoxin-type domains follow at residues 368 to 397 and 407 to 435; these read MGET…QQLY and KATA…LVQY. Residues cysteine 377, cysteine 380, cysteine 383, cysteine 387, cysteine 416, cysteine 419, cysteine 422, and cysteine 426 each coordinate [4Fe-4S] cluster. Positions 536 to 684 are disordered; sequence RARQAENIPA…EPVDPRKAAV (149 aa).

It belongs to the 4Fe4S bacterial-type ferredoxin family. RnfC subfamily. The complex is composed of six subunits: RnfA, RnfB, RnfC, RnfD, RnfE and RnfG. The cofactor is [4Fe-4S] cluster.

Its subcellular location is the cell inner membrane. Functionally, part of a membrane-bound complex that couples electron transfer with translocation of ions across the membrane. The protein is Ion-translocating oxidoreductase complex subunit C of Citrobacter koseri (strain ATCC BAA-895 / CDC 4225-83 / SGSC4696).